A 398-amino-acid polypeptide reads, in one-letter code: Acetyl-CoA acetyltransferase (398 aa).

Ser2 carries the N-acetylserine modification. The active-site Acyl-thioester intermediate is the Cys91. Positions 186 and 231 each coordinate CoA. Tyr186 contributes to the K(+) binding site. 3 residues coordinate K(+): Ala248, Ala249, and Ala251. Ser252 contributes to the CoA binding site. Position 350 (Val350) interacts with K(+). Active-site proton acceptor residues include His354 and Cys384.

This sequence belongs to the thiolase-like superfamily. Thiolase family. Homotetramer.

It localises to the cytoplasm. Its subcellular location is the cytosol. It carries out the reaction 2 acetyl-CoA = acetoacetyl-CoA + CoA. It functions in the pathway metabolic intermediate biosynthesis; (R)-mevalonate biosynthesis; (R)-mevalonate from acetyl-CoA: step 1/3. Its function is as follows. Acetyl-CoA acetyltransferase; part of the first module of ergosterol biosynthesis pathway that includes the early steps of the pathway, conserved across all eukaryotes, and which results in the formation of mevalonate from acetyl-coenzyme A (acetyl-CoA). ERG10 catalyzes the formation of acetoacetyl-CoA from acetyl-CoA. The first module starts with the action of the cytosolic acetyl-CoA acetyltransferase ERG10 that catalyzes the formation of acetoacetyl-CoA. The hydroxymethylglutaryl-CoA synthase ERG13 then condenses acetyl-CoA with acetoacetyl-CoA to form HMG-CoA. The rate-limiting step of the early module is the reduction to mevalonate by the 3-hydroxy-3-methylglutaryl-coenzyme A (HMG-CoA) reductases HMG1 and HMG2 which are derived from a single ancestral HMGR gene by gene duplication. In Saccharomyces cerevisiae (strain ATCC 204508 / S288c) (Baker's yeast), this protein is Acetyl-CoA acetyltransferase.